Here is a 287-residue protein sequence, read N- to C-terminus: Immunoglobulin alpha Fc receptor (287 aa).

The first 21 residues, 1–21, serve as a signal peptide directing secretion; the sequence is MDPKQTTLLCLVLCLGQRIQA. The Extracellular segment spans residues 22-227; sequence QEGDFPMPFI…SIHQDYTTQN (206 aa). 2 consecutive Ig-like C2-type domains span residues 42–107 and 139–200; these read DGSV…IGHY and GENI…YNRS. A disulfide bridge links cysteine 49 with cysteine 100. Residues asparagine 65, asparagine 79, asparagine 141, asparagine 177, and asparagine 186 are each glycosylated (N-linked (GlcNAc...) asparagine). Residues cysteine 146 and cysteine 193 are joined by a disulfide bond. A helical membrane pass occupies residues 228 to 246; the sequence is LIRMAVAGLVLVALLAILV. Over 247-287 the chain is Cytoplasmic; sequence ENWHSHTALNKEASADVAEPSWSQQMCQPGLTFARTPSVCK.

As to quaternary structure, associates with the Fc epsilon RI gamma 2 receptor inducing tyrosine phosphorylation of gamma 2. In terms of assembly, (Microbial infection) Interacts with Staphylococcus aureus protein SSL11. As to expression, isoform A.1, isoform A.2 and isoform A.3 are differentially expressed between blood and mucosal myeloid cells. Isoform A.1, isoform A.2 and isoform A.3 are expressed in monocytes. Isoform A.1 and isoform A.2 are expressed in alveolar macrophages; however only one isoform is expressed at alveolar macrophages surfaces.

The protein localises to the cell membrane. It is found in the secreted. Functionally, binds to the Fc region of immunoglobulins alpha. Mediates several functions including cytokine production. The chain is Immunoglobulin alpha Fc receptor (FCAR) from Homo sapiens (Human).